The chain runs to 80 residues: WAP four-disulfide core domain protein 15B (80 aa).

The signal sequence occupies residues 1-20 (MKLLGLSLLAVTILLCCNMA). Residues 29-76 (VFSKPGYCPEYRVPCPFVLIPKCRRDKGCKDALKCCFFYCQMRCVDPW) form the WAP domain. Disulfide bonds link Cys-36/Cys-64, Cys-43/Cys-68, Cys-51/Cys-63, and Cys-57/Cys-72.

In terms of tissue distribution, constitutively expressed in kidney and epididymis.

It localises to the secreted. Its function is as follows. Antibacterial protein which inhibits the growth of E.coli and S.aureus. This is WAP four-disulfide core domain protein 15B (Wfdc15b) from Mus musculus (Mouse).